The following is a 62-amino-acid chain: Ubiquinol-cytochrome c reductase complex 6.7 kDa protein (62 aa).

Residues 2 to 25 (TSPAAAGNGLFKFLRPKLRPQSTD) are Mitochondrial matrix-facing. Residues 26 to 44 (IQAAAGWGVAAVTGALWVI) traverse the membrane as a helical segment. Over 45 to 62 (QPWDFLRKTFIEKQEEEK) the chain is Mitochondrial intermembrane.

Belongs to the UQCR11/QCR10 family. Component of the ubiquinol-cytochrome c oxidoreductase (cytochrome b-c1 complex, complex III, CIII), a multisubunit enzyme composed of 3 respiratory subunits cytochrome b, cytochrome c1 and Rieske protein, 2 core protein subunits, and additional low-molecular weight protein subunits. The complex exists as an obligatory dimer and forms supercomplexes (SCs) in the inner mitochondrial membrane with cytochrome c oxidase (complex IV, CIV).

It localises to the mitochondrion inner membrane. Its function is as follows. Component of the ubiquinol-cytochrome c oxidoreductase, a multisubunit transmembrane complex that is part of the mitochondrial electron transport chain which drives oxidative phosphorylation. The respiratory chain contains 3 multisubunit complexes succinate dehydrogenase (complex II, CII), ubiquinol-cytochrome c oxidoreductase (cytochrome b-c1 complex, complex III, CIII) and cytochrome c oxidase (complex IV, CIV), that cooperate to transfer electrons derived from NADH and succinate to molecular oxygen, creating an electrochemical gradient over the inner membrane that drives transmembrane transport and the ATP synthase. The cytochrome b-c1 complex catalyzes electron transfer from ubiquinol to cytochrome c, linking this redox reaction to translocation of protons across the mitochondrial inner membrane, with protons being carried across the membrane as hydrogens on the quinol. In the process called Q cycle, 2 protons are consumed from the matrix, 4 protons are released into the intermembrane space and 2 electrons are passed to cytochrome c. QCR10 has a role in CIII assembly and RIP1 stability. The chain is Ubiquinol-cytochrome c reductase complex 6.7 kDa protein from Solanum tuberosum (Potato).